We begin with the raw amino-acid sequence, 467 residues long: Indoleacetamide hydrolase (467 aa).

Residues Lys-74 and Ser-149 each act as charge relay system in the active site. Residue Ser-173 is the Acyl-ester intermediate of the active site.

The protein belongs to the amidase family.

Its pathway is plant hormone metabolism; auxin biosynthesis. In terms of biological role, hydrolyzes indole-3-acetamide (IAM) into indole-3-acetic acid (IAA). The sequence is that of Indoleacetamide hydrolase (TA-iaaH) from Agrobacterium vitis (Rhizobium vitis).